The chain runs to 523 residues: Ribonuclease Y (523 aa).

The helical transmembrane segment at 3 to 23 (VWYAIGSIIFGLLVGVSVYLI) threads the bilayer. Residues 213-279 (LVNVINLPND…TKTIEKLVED (67 aa)) enclose the KH domain. An HD domain is found at 339-432 (ALGHSIEVAN…VCAADTLSAA (94 aa)).

This sequence belongs to the RNase Y family.

Its subcellular location is the cell membrane. Endoribonuclease that initiates mRNA decay. The chain is Ribonuclease Y from Helicobacter hepaticus (strain ATCC 51449 / 3B1).